The primary structure comprises 959 residues: DEAD-box ATP-dependent RNA helicase rde-12 (959 aa).

The interval 1-336 (MSSFGNNAGG…EGVNAPVRAP (336 aa)) is disordered. Residues 71–97 (GRREDDRSHSRDNHGGSRYGERDDRGN) are compositionally biased toward basic and acidic residues. A compositionally biased stretch (polar residues) spans 98-118 (NGRSADNRYSQSNYNYDSNRG). The segment covering 122–134 (YQRDNHGSKDDRG) has biased composition (basic and acidic residues). The span at 137 to 160 (NQYNDHGSNHNSNSRNDQYRQGSY) shows a compositional bias: polar residues. Basic and acidic residues-rich tracts occupy residues 166 to 181 (SGYR…DNDQ) and 189 to 201 (RDSD…DHHN). Polar residues predominate over residues 202 to 213 (YNSQSSPRSHQG). Composition is skewed to basic and acidic residues over residues 219 to 239 (SAPK…HDSY) and 255 to 270 (YRND…DHRS). Residues 271-280 (GGNNSSSGFK) are compositionally biased toward low complexity. Gly residues predominate over residues 281–301 (NDGGFGGNDNRGFGNNGGGSF). A compositionally biased stretch (low complexity) spans 302–317 (GNPNNSYRGNSNNIGG). The short motif at 380–408 (TSWTNSGLHPTILETLKRIKYNNVRTIQG) is the Q motif element. Positions 411 to 599 (IPQVLDGHDV…NELMKRLPGQ (189 aa)) constitute a Helicase ATP-binding domain. 424 to 431 (AETSAGKT) lines the ATP pocket. A DEAD box motif is present at residues 539–542 (DEAD). The 161-residue stretch at 632–792 (KLREILKQNV…KVPDFLDAMA (161 aa)) folds into the Helicase C-terminal domain. 2 disordered regions span residues 793–834 (KSSR…GGGR) and 858–959 (GGGG…DDEW). Composition is skewed to gly residues over residues 800 to 834 (GTSG…GGGR) and 858 to 872 (GGGG…GFGG). The span at 930–941 (TLGSSTFGTANN) shows a compositional bias: polar residues. A compositionally biased stretch (acidic residues) spans 942–959 (ADEEPTETGADGNDDDEW).

The protein belongs to the DEAD box helicase family. DDX3/DED1 subfamily. As to quaternary structure, interacts with wago-1, ergo-1 and rde-1. Mg(2+) serves as cofactor. Expressed in the soma and germline.

The protein resides in the cytoplasm. The protein localises to the perinuclear region. It localises to the cytoplasmic granule. It is found in the P-body. The enzyme catalyses ATP + H2O = ADP + phosphate + H(+). Functionally, probable ATP-dependent RNA helicase involved in RNAi-mediated gene silencing. Specifically required in the endogenous siRNA pathway for biogenesis of secondary endogenous small interfering RNA (siRNA) intermediates called 22G-RNAs. May associate with and recruit rde-10 to primary siRNA-targeted mRNA for secondary siRNA synthesis. May be recruited to target mRNAs by rde-1 and/or ergo-1. The chain is DEAD-box ATP-dependent RNA helicase rde-12 from Caenorhabditis elegans.